The primary structure comprises 241 residues: Lactate utilization protein C (241 aa).

It belongs to the LutC/YkgG family.

In terms of biological role, is involved in L-lactate degradation and allows cells to grow with lactate as the sole carbon source. The sequence is that of Lactate utilization protein C from Bacillus velezensis (strain DSM 23117 / BGSC 10A6 / LMG 26770 / FZB42) (Bacillus amyloliquefaciens subsp. plantarum).